A 648-amino-acid polypeptide reads, in one-letter code: cAMP-dependent protein kinase catalytic subunit (648 aa).

Low complexity-rich tracts occupy residues Met1–Asn20, Ser46–Gly67, Gln136–Gln175, and Asn232–Thr254. 4 disordered regions span residues Met1–Val25, Gly40–Asp86, Lys121–Gln175, and Gln219–Pro290. Positions Ser255–Pro290 are enriched in polar residues. One can recognise a Protein kinase domain in the interval Phe336–Phe590. Residues Ile342–Val350 and Lys365 each bind ATP. Asp459 (proton acceptor) is an active-site residue. Thr490 is modified (phosphothreonine). Residues Ser591–Phe648 enclose the AGC-kinase C-terminal domain.

This sequence belongs to the protein kinase superfamily. AGC Ser/Thr protein kinase family. cAMP subfamily. In terms of assembly, in Dictyostelium the holoenzyme is a dimer composed of a regulatory (R) and a catalytic (C) subunit. In the presence of cAMP it dissociates into the active C subunit and an R monomer.

It carries out the reaction L-seryl-[protein] + ATP = O-phospho-L-seryl-[protein] + ADP + H(+). The enzyme catalyses L-threonyl-[protein] + ATP = O-phospho-L-threonyl-[protein] + ADP + H(+). Its function is as follows. Essential for differentiation and fruit morphogenesis. This chain is cAMP-dependent protein kinase catalytic subunit (pkaC), found in Dictyostelium discoideum (Social amoeba).